The chain runs to 34 residues: U10-ctenitoxin-Pr1a (34 aa).

Cystine bridges form between Cys2-Cys15, Cys9-Cys20, Cys14-Cys31, and Cys22-Cys29.

As to expression, expressed by the venom gland.

The protein resides in the secreted. Functionally, non-toxic to mice and insects. The sequence is that of U10-ctenitoxin-Pr1a from Phoneutria reidyi (Brazilian Amazonian armed spider).